The primary structure comprises 213 residues: tRNA (guanine-N(7)-)-methyltransferase (213 aa).

S-adenosyl-L-methionine contacts are provided by Asp-44, Glu-69, Asn-96, and Asp-119. Asp-119 is an active-site residue. The substrate site is built by Lys-123 and Asp-155.

Belongs to the class I-like SAM-binding methyltransferase superfamily. TrmB family.

The catalysed reaction is guanosine(46) in tRNA + S-adenosyl-L-methionine = N(7)-methylguanosine(46) in tRNA + S-adenosyl-L-homocysteine. Its pathway is tRNA modification; N(7)-methylguanine-tRNA biosynthesis. Functionally, catalyzes the formation of N(7)-methylguanine at position 46 (m7G46) in tRNA. This Thermosynechococcus vestitus (strain NIES-2133 / IAM M-273 / BP-1) protein is tRNA (guanine-N(7)-)-methyltransferase.